We begin with the raw amino-acid sequence, 412 residues long: MKNLILKEILNNELKRQQGYIELIASENYVSEQILEATGSVFTNKYCEGYPNRRYYGGCEYADQIEQLAIDKAKEIFNAKFANVQPHSGTQANVAAYLSVLKPNDKILAMGLNEGGHLSHGSKVNISGKTYEADHYGVDKETQCLDYDAILKQAQEVKPKLIVCGASNYSRVVDFKKFGEIAKSVGAYLLADVAHISGLIVAGYHPNPLPYADIVTTTTHKTLRGPRSGLILTNNEELIKKINSAVFPGSQGGPLMHVIAAKYLCFDEASKPEFKTYIKNVIDNIAILSQTLKELGYKIIADGSDNHLLSVDLYSSKQITGDLVEQWLEQAKIVVNKNLIPYDINSAKSPSGIRIGSAAMTTRGFTTKEFKQIGLWIHEIIESKGNPNTINKIRNEVDLLVKKFPIYQDIKY.

Residues Leu-112 and 116–118 (GHL) each bind (6S)-5,6,7,8-tetrahydrofolate. Lys-221 bears the N6-(pyridoxal phosphate)lysine mark. Glu-237 lines the (6S)-5,6,7,8-tetrahydrofolate pocket.

It belongs to the SHMT family. Homodimer. Requires pyridoxal 5'-phosphate as cofactor.

Its subcellular location is the cytoplasm. The catalysed reaction is (6R)-5,10-methylene-5,6,7,8-tetrahydrofolate + glycine + H2O = (6S)-5,6,7,8-tetrahydrofolate + L-serine. It participates in one-carbon metabolism; tetrahydrofolate interconversion. Its pathway is amino-acid biosynthesis; glycine biosynthesis; glycine from L-serine: step 1/1. Its function is as follows. Catalyzes the reversible interconversion of serine and glycine with tetrahydrofolate (THF) serving as the one-carbon carrier. This reaction serves as the major source of one-carbon groups required for the biosynthesis of purines, thymidylate, methionine, and other important biomolecules. Also exhibits THF-independent aldolase activity toward beta-hydroxyamino acids, producing glycine and aldehydes, via a retro-aldol mechanism. The polypeptide is Serine hydroxymethyltransferase (Malacoplasma penetrans (strain HF-2) (Mycoplasma penetrans)).